The sequence spans 262 residues: MKLNDIINIIEDIAPVNLKEGFDNVGLMVGDREKNITKILLALDCTEEVIKEAKEMGAELILTHHPLLFRKPSTITTDTLLGRKIISLIKNDINLYSAHTNWDSVKGGLNDTLVEILGFNKGIIMDKSPVDSEAGIGRVVELTKEMTVLEIINLIKSSLGVKNLRYAGDLNEVIKKIAIVNGSGQDFFGDAKKLGADLIITGDTTYHFVSDYKEMGLNILDIGHFNSEWPVLIKVSEKVKERLDSDVEFIVSKEAKDPFEFI.

5 residues coordinate a divalent metal cation: H64, H65, D103, H224, and E228.

The protein belongs to the GTP cyclohydrolase I type 2/NIF3 family. As to quaternary structure, homohexamer.

The sequence is that of GTP cyclohydrolase 1 type 2 homolog from Clostridium perfringens (strain 13 / Type A).